Here is a 309-residue protein sequence, read N- to C-terminus: Glutaminase (309 aa).

Substrate contacts are provided by Ser64, Asn114, Glu160, Asn167, Tyr191, Tyr243, and Val261.

The protein belongs to the glutaminase family. Homotetramer.

It carries out the reaction L-glutamine + H2O = L-glutamate + NH4(+). The protein is Glutaminase of Rhizobium rhizogenes (strain K84 / ATCC BAA-868) (Agrobacterium radiobacter).